The primary structure comprises 445 residues: Exodeoxyribonuclease 7 large subunit (445 aa).

Belongs to the XseA family. In terms of assembly, heterooligomer composed of large and small subunits.

The protein localises to the cytoplasm. It catalyses the reaction Exonucleolytic cleavage in either 5'- to 3'- or 3'- to 5'-direction to yield nucleoside 5'-phosphates.. In terms of biological role, bidirectionally degrades single-stranded DNA into large acid-insoluble oligonucleotides, which are then degraded further into small acid-soluble oligonucleotides. The polypeptide is Exodeoxyribonuclease 7 large subunit (Xanthomonas axonopodis pv. citri (strain 306)).